The sequence spans 640 residues: Threonine--tRNA ligase (640 aa).

One can recognise a TGS domain in the interval 1 to 61 (MPIITLPNGD…TEDSTLQIIT (61 aa)). Residues 242–533 (DHRKIGKALD…LIEHYAGFMP (292 aa)) are catalytic. Residues cysteine 333, histidine 384, and histidine 510 each coordinate Zn(2+).

Belongs to the class-II aminoacyl-tRNA synthetase family. As to quaternary structure, homodimer. It depends on Zn(2+) as a cofactor.

Its subcellular location is the cytoplasm. It catalyses the reaction tRNA(Thr) + L-threonine + ATP = L-threonyl-tRNA(Thr) + AMP + diphosphate + H(+). Functionally, catalyzes the attachment of threonine to tRNA(Thr) in a two-step reaction: L-threonine is first activated by ATP to form Thr-AMP and then transferred to the acceptor end of tRNA(Thr). Also edits incorrectly charged L-seryl-tRNA(Thr). The chain is Threonine--tRNA ligase from Acinetobacter baumannii (strain AB307-0294).